We begin with the raw amino-acid sequence, 239 residues long: Ribonuclease PH (239 aa).

Phosphate-binding positions include arginine 87 and 125-127 (GTR).

The protein belongs to the RNase PH family. In terms of assembly, homohexameric ring arranged as a trimer of dimers.

The enzyme catalyses tRNA(n+1) + phosphate = tRNA(n) + a ribonucleoside 5'-diphosphate. Phosphorolytic 3'-5' exoribonuclease that plays an important role in tRNA 3'-end maturation. Removes nucleotide residues following the 3'-CCA terminus of tRNAs; can also add nucleotides to the ends of RNA molecules by using nucleoside diphosphates as substrates, but this may not be physiologically important. Probably plays a role in initiation of 16S rRNA degradation (leading to ribosome degradation) during starvation. The protein is Ribonuclease PH of Dehalococcoides mccartyi (strain ATCC BAA-2266 / KCTC 15142 / 195) (Dehalococcoides ethenogenes (strain 195)).